Reading from the N-terminus, the 75-residue chain is Small ribosomal subunit protein bS16 (75 aa).

This sequence belongs to the bacterial ribosomal protein bS16 family.

In Helicobacter pylori (strain G27), this protein is Small ribosomal subunit protein bS16.